Reading from the N-terminus, the 290-residue chain is HTH-type transcriptional activator RhaR (290 aa).

The region spanning 179–277 is the HTH araC/xylS-type domain; it reads DLIMSALQQS…GMTPRDYRQR (99 aa). 2 DNA-binding regions (H-T-H motif) span residues 196-217 and 244-267; these read ANFC…RQQT and ISDI…TREA.

As to quaternary structure, binds DNA as a dimer.

It is found in the cytoplasm. Activates expression of the rhaSR operon in response to L-rhamnose. This Yersinia pseudotuberculosis serotype O:3 (strain YPIII) protein is HTH-type transcriptional activator RhaR.